We begin with the raw amino-acid sequence, 1416 residues long: DNA-directed RNA polymerase subunit beta' (1416 aa).

Residues cysteine 71, cysteine 73, cysteine 86, and cysteine 89 each contribute to the Zn(2+) site. Residues aspartate 461, aspartate 463, and aspartate 465 each contribute to the Mg(2+) site. Positions 815, 889, 896, and 899 each coordinate Zn(2+).

Belongs to the RNA polymerase beta' chain family. As to quaternary structure, the RNAP catalytic core consists of 2 alpha, 1 beta, 1 beta' and 1 omega subunit. When a sigma factor is associated with the core the holoenzyme is formed, which can initiate transcription. It depends on Mg(2+) as a cofactor. The cofactor is Zn(2+).

It carries out the reaction RNA(n) + a ribonucleoside 5'-triphosphate = RNA(n+1) + diphosphate. Functionally, DNA-dependent RNA polymerase catalyzes the transcription of DNA into RNA using the four ribonucleoside triphosphates as substrates. In Haemophilus influenzae (strain 86-028NP), this protein is DNA-directed RNA polymerase subunit beta'.